The primary structure comprises 48 residues: uncharacterized protein (48 aa).

The interval 1 to 48 (MSRRMGGGMPKINLSGAIPNNNTSTPSTPTLRSSVSVSSSNSRGLFLA) is disordered. Over residues 20-48 (NNNTSTPSTPTLRSSVSVSSSNSRGLFLA) the composition is skewed to low complexity.

This is an uncharacterized protein from Dictyostelium discoideum (Social amoeba).